Consider the following 144-residue polypeptide: Maximins 6/Hv (144 aa).

A signal peptide spans 1–18; that stretch reads MNFKYIVAVSFLIASGYA. The propeptide occupies 19-43; the sequence is RSEENDVQSLSQREVLEEETLREIR. N70 bears the Asparagine amide mark. Positions 74–123 are excised as a propeptide; it reads TAKGHEVMKRLEAVMRDLDSLDHPEEASERETRGFNQEEIANLFTKKEKR. I143 carries the isoleucine amide modification.

Belongs to the bombinin family. Expressed by the skin glands.

It localises to the secreted. Shows antimicrobial activity against bacteria and against the fungus C.albicans. It has little hemolytic activity. Its function is as follows. Shows antimicrobial activity against bacteria and against the fungus C.albicans. Shows strong hemolytic activity. The chain is Maximins 6/Hv from Bombina maxima (Giant fire-bellied toad).